Here is a 345-residue protein sequence, read N- to C-terminus: Microtubule-associated protein Jupiter (345 aa).

A compositionally biased stretch (polar residues) spans 1–14; that stretch reads MISNFDCTDNQASS. Residues 1 to 34 are disordered; sequence MISNFDCTDNQASSKVLRPPGGGSSDIFGSEMPQ. Serine 24 is modified (phosphoserine). Threonine 35 carries the post-translational modification Phosphothreonine. Over residues 78–87 the composition is skewed to basic and acidic residues; the sequence is QKTVDSHNRL. A disordered region spans residues 78 to 100; it reads QKTVDSHNRLFGEPTRPITPGKN. A phosphothreonine mark is found at threonine 92 and threonine 96. A phosphoserine mark is found at serine 105, serine 134, and serine 145. 2 disordered regions span residues 127–241 and 300–345; these read HYNG…QPHS and EGNP…SGLW. Positions 132–145 are enriched in low complexity; the sequence is SGSVSSASSSVSSS. Polar residues predominate over residues 146–164; that stretch reads TENLKMNSGSRSVFRNMST. Pro residues predominate over residues 177-191; that stretch reads LCPPSPVRIEPPTPP. Composition is skewed to polar residues over residues 212–226 and 315–326; these read DNST…NEAC and DYNQRQESSNAG.

This sequence belongs to the MAP Jupiter family.

The protein localises to the nucleus. It is found in the cytoplasm. Its subcellular location is the cytoskeleton. The protein resides in the spindle. Its function is as follows. Binds to all microtubule populations. The polypeptide is Microtubule-associated protein Jupiter (Drosophila erecta (Fruit fly)).